We begin with the raw amino-acid sequence, 275 residues long: Translation initiation factor 2 subunit alpha (275 aa).

One can recognise an S1 motif domain in the interval 12–83; sequence GELVVATVKR…KKGHIDLSLR (72 aa).

Belongs to the eIF-2-alpha family. Heterotrimer composed of an alpha, a beta and a gamma chain.

Functionally, eIF-2 functions in the early steps of protein synthesis by forming a ternary complex with GTP and initiator tRNA. The chain is Translation initiation factor 2 subunit alpha from Pyrococcus furiosus (strain ATCC 43587 / DSM 3638 / JCM 8422 / Vc1).